A 472-amino-acid chain; its full sequence is Probable sterol O-acyltransferase 2 (472 aa).

Serine 12 carries the post-translational modification Phosphoserine. Helical transmembrane passes span 61–81 (FTGF…MSFL), 111–131 (LAMS…ALGY), and 135–155 (YGLG…HCVL). N-linked (GlcNAc...) asparagine glycosylation occurs at asparagine 161. A helical membrane pass occupies residues 170-190 (FILHSMVILMKLHSYNVVNGW). A glycan (N-linked (GlcNAc...) asparagine) is linked at asparagine 233. Transmembrane regions (helical) follow at residues 262–282 (IHYL…LVII) and 317–337 (TVAF…WVIF). N-linked (GlcNAc...) asparagine glycosylation is present at asparagine 342. Residues 355-361 (FYDDWWN) carry the FYXDWWN motif motif. The active site involves histidine 409. A helical transmembrane segment spans residues 452–472 (IAFWFSIIIGIALIAALYILF).

The protein belongs to the membrane-bound acyltransferase family. Sterol o-acyltransferase subfamily.

The protein resides in the endoplasmic reticulum membrane. Functionally, sterol O-acyltransferase that catalyzes the formation of stery esters. This chain is Probable sterol O-acyltransferase 2 (are2), found in Schizosaccharomyces pombe (strain 972 / ATCC 24843) (Fission yeast).